The chain runs to 100 residues: Large ribosomal subunit protein uL23 (100 aa).

The protein belongs to the universal ribosomal protein uL23 family. Part of the 50S ribosomal subunit. Contacts protein L29, and trigger factor when it is bound to the ribosome.

Functionally, one of the early assembly proteins it binds 23S rRNA. One of the proteins that surrounds the polypeptide exit tunnel on the outside of the ribosome. Forms the main docking site for trigger factor binding to the ribosome. This Synechococcus sp. (strain CC9605) protein is Large ribosomal subunit protein uL23.